The chain runs to 514 residues: Sugar transport protein 4 (514 aa).

The Cytoplasmic segment spans residues 1-22 (MAGGFVSQTPGVRNYNYKLTPK). Helical transmembrane passes span 23–43 (VFVT…DLGI), 80–100 (LLTL…LFAS), 117–137 (FTFF…MLLI), 140–160 (ILLG…LSEM), 172–192 (GFQV…YFTA), 202–222 (ISLG…LILP), 283–303 (LIMT…VITF), 321–341 (LSAM…VFTV), 348–368 (ILFL…GAMI), 387–407 (LIVA…GPLG), 426–446 (INVS…LTML), and 451–471 (FGLF…IYLM). The Cytoplasmic portion of the chain corresponds to 472–514 (LPETKNVPIEEMNRVWKAHWFWGKFIPDEAVNMGAAEMQQKSV).

Belongs to the major facilitator superfamily. Sugar transporter (TC 2.A.1.1) family. In terms of tissue distribution, mostly in flowers and roots, especially in anthers, including pollen, and root tips. Also present in some hydathodes.

It localises to the cell membrane. Mediates an active uptake of hexoses, probably by sugar/hydrogen symport. Can transport glucose, methylglucose, galactose, xylose and mannose, but not fructose. The chain is Sugar transport protein 4 (STP4) from Arabidopsis thaliana (Mouse-ear cress).